The following is a 165-amino-acid chain: Probable chemoreceptor glutamine deamidase CheD (165 aa).

This sequence belongs to the CheD family.

It catalyses the reaction L-glutaminyl-[protein] + H2O = L-glutamyl-[protein] + NH4(+). In terms of biological role, probably deamidates glutamine residues to glutamate on methyl-accepting chemotaxis receptors (MCPs), playing an important role in chemotaxis. The sequence is that of Probable chemoreceptor glutamine deamidase CheD from Symbiobacterium thermophilum (strain DSM 24528 / JCM 14929 / IAM 14863 / T).